We begin with the raw amino-acid sequence, 403 residues long: N-isopropylammelide isopropyl amidohydrolase (403 aa).

The Zn(2+) site is built by H60, H62, and H217. Catalysis depends on H249, which acts as the Proton donor/acceptor. D303 lines the Zn(2+) pocket.

The protein belongs to the metallo-dependent hydrolases superfamily. N-acyl-D-amino-acid deacylase family. As to quaternary structure, homotetramer. It depends on Zn(2+) as a cofactor.

The protein localises to the cytoplasm. It carries out the reaction N-isopropylammelide + H2O + H(+) = isopropylamine + cyanurate. The protein operates within xenobiotic degradation; atrazine degradation; cyanurate from atrazine: step 3/3. Its activity is regulated as follows. Inhibited by N-ethylammeline, N-hydroxyethylammeline, N-isopropylammeline, ammeline and 2-amino-4hydroxy-1,3,5-s-triazine. Functionally, transforms N-isopropylammelide to cyanuric acid and isopropylamine. The protein is N-isopropylammelide isopropyl amidohydrolase (atzC) of Pseudomonas sp. (strain ADP).